A 1436-amino-acid chain; its full sequence is MAYGEPYYSSKPDKDFNFGSTMARRQMTPTMVTKLPKFVRNSPQAYDWIVRGLIFPTIGKTYFQRVVVITGGLEDGTYGSFAFDGKEWVGIYPIEHLNLMSSLKLIHKANALQERLRLSQEEKATLALDVQFLQHENVRLKEMIPKPEPRKIQMKWIIMGAVLTFLSLIPGGYAHSQTNNTIFTDMIAACKYSTETLTENLDLRIKLALANITISDKLDAVRQILNFAFVPRAHWLRTVFYYIHYYEMWNIFMFVLAIGTVMRSARPGTDLVTLATSHLSGFRMAVLPTIPFHTTMTLWVMNTLMVCYYFDNLLAITLAILAPILGIIFLCFMEDSNYVSQIRGLIATAVLIAGGHACLTLTGTTTSLFVVILTCRFIRMATVFIGTRFEIRDANGKVVATVPTRIKNVAFDFFQKLKQSGVRVGVNEFVVIKPGALCVIDTPEGKGTGFFSGNDIVTAAHVVGNNTFVNVCYEGLMYEAKVRYMPEKDIAFLTCPGDLHPTARLKLSKNPDYSCVTVMAYVNEDLVVSTAAAMVHGNTLSYAVRTQDGMSGAPVCDKYGRVLAVHQTNTGYTGGAVIIDPADFHPVKAPSQVELLKEEIERLKAQLNSATENATTVVTQQPSAALEQKSVSDSDVVDLVRTAMEREMKVLRDEINGILAPFLQKKKGKTKHGRGRVRRNLRKGVKLLTEEEYRELLEKGLDRETFLDLIDRIIGERSGYPDYDDEDYYDEDDDGWGMVGDDVEFDYTEVINFDQAKPIPAPRTTKQKICPEPEVESQPLDLSQKKEKQSEYEQQVVKSTKPQQLEHEQQVVKPIKPQKSEPQPYSQTYGKAPIWESYDFDWDEDDAKFILPAPHRLTKADEIVLGSKIVKLRTIIETAIKTQNYSALPEAVFELDKAAYEAGLEGFLQRVKSKNKAPEKQGPKKLQRAPEDQGAQNYHSLDAWKLLLEPPRERRCVPANFPLLGHLPINRPIFDDKKPRDDLLGLLPEPTWHAFEEYGPTTWGPQAFIKSFDKFFYAEPIDFFSEYPQLCAFADWATYREFRYLEDTRVIHITATEKNTDSTPAYPKMNYFDTEENYLEAHGWAPYIREFTRVYKGDKPEVLWYLFLKKEIIKEEKIRNSDIRQIVCADPIYTRIGACLEAHQNALMKQHTDTSVGQCGWSPMEGGFKKTMQRLVNKGNKHFIEFDWTRYDGTIPPALFKHIKEIRWNFINKDQREKYRHVHEWYVNNLLNRHVLLPSGEVTLQTRGNPSGQFSTTMDNNMVNFWLQAFEFAYFNGPDRDLWKTYDTVVYGDDRLSTTPSVPDDYEERVITMYRDIFGMWVKPGKVICRDSIVGLSFCGFTVNENLEPVPTSPEKLMASLLKPYKILPDLESLHGKLLCYQLLAAFMAEDHPFKVYVEHCLSRTAKQLRDSGLPARLTEEQLHRIWRGGPKKCDG.

Residues 104-142 (KLIHKANALQERLRLSQEEKATLALDVQFLQHENVRLKE) are a coiled coil. The next 5 helical transmembrane spans lie at 156 to 176 (WIIMGAVLTFLSLIPGGYAHS), 239 to 259 (VFYYIHYYEMWNIFMFVLAIG), 286 to 306 (VLPTIPFHTTMTLWVMNTLMV), 313 to 333 (LLAITLAILAPILGIIFLCFM), and 344 to 364 (GLIATAVLIAGGHACLTLTGT). Active-site charge relay system; for serine protease activity residues include H461, D489, and S551. Residues 587–620 (VKAPSQVELLKEEIERLKAQLNSATENATTVVTQ) adopt a coiled-coil conformation. Position 693 is an O-(5'-phospho-RNA)-tyrosine (Y693). 2 disordered regions span residues 756–828 (AKPI…YSQT) and 913–934 (SKNKAPEKQGPKKLQRAPEDQG). Residues 1181–1307 (KHFIEFDWTR…TTPSVPDDYE (127 aa)) enclose the RdRp catalytic domain.

It belongs to the astroviridae polyprotein 1AB family. In terms of assembly, monomer. In terms of processing, cleaved by the viral and host proteases. The protease is probably autocatalytically cleaved.

Its subcellular location is the host membrane. The enzyme catalyses RNA(n) + a ribonucleoside 5'-triphosphate = RNA(n+1) + diphosphate. Functionally, responsible for the cleavage of the polyprotein into functional products. Its function is as follows. Protein covalently attached to the 5' extremity of the genomic and subgenomic RNAs. It may serve as a primer for the replicase. This Homo sapiens (Human) protein is Non-structural polyprotein 1AB (ORF1).